A 194-amino-acid polypeptide reads, in one-letter code: ATP-dependent Clp protease proteolytic subunit (194 aa).

Serine 98 (nucleophile) is an active-site residue. Residue histidine 123 is part of the active site.

The protein belongs to the peptidase S14 family. In terms of assembly, fourteen ClpP subunits assemble into 2 heptameric rings which stack back to back to give a disk-like structure with a central cavity, resembling the structure of eukaryotic proteasomes.

The protein localises to the cytoplasm. It carries out the reaction Hydrolysis of proteins to small peptides in the presence of ATP and magnesium. alpha-casein is the usual test substrate. In the absence of ATP, only oligopeptides shorter than five residues are hydrolyzed (such as succinyl-Leu-Tyr-|-NHMec, and Leu-Tyr-Leu-|-Tyr-Trp, in which cleavage of the -Tyr-|-Leu- and -Tyr-|-Trp bonds also occurs).. Cleaves peptides in various proteins in a process that requires ATP hydrolysis. Has a chymotrypsin-like activity. Plays a major role in the degradation of misfolded proteins. In Ruminiclostridium cellulolyticum (strain ATCC 35319 / DSM 5812 / JCM 6584 / H10) (Clostridium cellulolyticum), this protein is ATP-dependent Clp protease proteolytic subunit.